The chain runs to 703 residues: tRNA 5-methylaminomethyl-2-thiouridine biosynthesis bifunctional protein MnmC (703 aa).

Residues 1–281 are tRNA (mnm(5)s(2)U34)-methyltransferase; sequence MTAKPQKSCQ…KPAALVAKDH (281 aa). An FAD-dependent cmnm(5)s(2)U34 oxidoreductase region spans residues 286–703; that stretch reads VGGGLASANL…LRKLLKGKAL (418 aa).

In the N-terminal section; belongs to the methyltransferase superfamily. tRNA (mnm(5)s(2)U34)-methyltransferase family. The protein in the C-terminal section; belongs to the DAO family. The cofactor is FAD.

It localises to the cytoplasm. The catalysed reaction is 5-aminomethyl-2-thiouridine(34) in tRNA + S-adenosyl-L-methionine = 5-methylaminomethyl-2-thiouridine(34) in tRNA + S-adenosyl-L-homocysteine + H(+). In terms of biological role, catalyzes the last two steps in the biosynthesis of 5-methylaminomethyl-2-thiouridine (mnm(5)s(2)U) at the wobble position (U34) in tRNA. Catalyzes the FAD-dependent demodification of cmnm(5)s(2)U34 to nm(5)s(2)U34, followed by the transfer of a methyl group from S-adenosyl-L-methionine to nm(5)s(2)U34, to form mnm(5)s(2)U34. The protein is tRNA 5-methylaminomethyl-2-thiouridine biosynthesis bifunctional protein MnmC of Shewanella sp. (strain MR-7).